Reading from the N-terminus, the 286-residue chain is Beta-lactamase TEM-12 (286 aa).

Residues 1–23 (MSIQHFRVALIPFFAAFCLPVFA) form the signal peptide. The active-site Acyl-ester intermediate is the serine 68. A disulfide bond links cysteine 75 and cysteine 121. Catalysis depends on glutamate 166, which acts as the Proton acceptor. 232-234 (KSG) is a binding site for substrate.

It belongs to the class-A beta-lactamase family.

The enzyme catalyses a beta-lactam + H2O = a substituted beta-amino acid. Its function is as follows. TEM-type are the most prevalent beta-lactamases in enterobacteria; they hydrolyze the beta-lactam bond in susceptible beta-lactam antibiotics, thus conferring resistance to penicillins and cephalosporins such as ceftazidime. The protein is Beta-lactamase TEM-12 (blaT-12b) of Klebsiella oxytoca.